The primary structure comprises 198 residues: Putative pseudouridine methyltransferase (198 aa).

Positions 132 and 186 each coordinate S-adenosyl-L-methionine.

The protein belongs to the methyltransferase superfamily. TrmY family.

Its subcellular location is the cytoplasm. This Vibrio vulnificus (strain CMCP6) protein is Putative pseudouridine methyltransferase.